The following is a 567-amino-acid chain: Mitochondrial distribution and morphology protein 34 (567 aa).

Residues 1 to 224 (MSFKFNEESF…LPSALFNMSR (224 aa)) enclose the SMP-LTD domain. The span at 392-416 (NKATETSSNLNADSEITPVSSSHNA) shows a compositional bias: polar residues. Positions 392 to 453 (NKATETSSNL…NRSSSFTSSI (62 aa)) are disordered. Residues 417–452 (TSSVNTITSLTTSSLGSTAGSSNSKNTNRSSSFTSS) are compositionally biased toward low complexity.

It belongs to the MDM34 family. As to quaternary structure, component of the ER-mitochondria encounter structure (ERMES) or MDM complex, composed of MMM1, MDM10, MDM12 and MDM34.

Its subcellular location is the mitochondrion outer membrane. Its function is as follows. Component of the ERMES/MDM complex, which serves as a molecular tether to connect the endoplasmic reticulum (ER) and mitochondria. Components of this complex are involved in the control of mitochondrial shape and protein biogenesis, and function in nonvesicular lipid trafficking between the ER and mitochondria. MDM34 is required for the interaction of the ER-resident membrane protein MMM1 and the outer mitochondrial membrane-resident beta-barrel protein MDM10. This Vanderwaltozyma polyspora (strain ATCC 22028 / DSM 70294 / BCRC 21397 / CBS 2163 / NBRC 10782 / NRRL Y-8283 / UCD 57-17) (Kluyveromyces polysporus) protein is Mitochondrial distribution and morphology protein 34.